The following is a 205-amino-acid chain: Large ribosomal subunit protein uL4 (205 aa).

Positions 43-96 (GKRQGTSKVKNRSAVRGGGKKPWRQKGTGRARQGSIRSPQWRGGGTVFGPTPRS) are disordered. Over residues 51 to 71 (VKNRSAVRGGGKKPWRQKGTG) the composition is skewed to basic residues.

It belongs to the universal ribosomal protein uL4 family. As to quaternary structure, part of the 50S ribosomal subunit.

In terms of biological role, one of the primary rRNA binding proteins, this protein initially binds near the 5'-end of the 23S rRNA. It is important during the early stages of 50S assembly. It makes multiple contacts with different domains of the 23S rRNA in the assembled 50S subunit and ribosome. Forms part of the polypeptide exit tunnel. This Lactobacillus helveticus (strain DPC 4571) protein is Large ribosomal subunit protein uL4.